Here is a 609-residue protein sequence, read N- to C-terminus: Proteasome-associated ATPase (609 aa).

The disordered stretch occupies residues 1–24 (MGESERSEAFGIPRDSPLSSGDAA). A coiled-coil region spans residues 20–96 (SGDAAELEQL…LREEVDRLGQ (77 aa)). 296–301 (GCGKTL) is a binding site for ATP. The interval 608-609 (YL) is docks into pockets in the proteasome alpha-ring.

The protein belongs to the AAA ATPase family. Homohexamer. Assembles into a hexameric ring structure that caps the 20S proteasome core. Strongly interacts with the prokaryotic ubiquitin-like protein Pup through a hydrophobic interface; the interacting region of ARC lies in its N-terminal coiled-coil domain. There is one Pup binding site per ARC hexamer ring. Upon ATP-binding, the C-terminus of ARC interacts with the alpha-rings of the proteasome core, possibly by binding to the intersubunit pockets.

It participates in protein degradation; proteasomal Pup-dependent pathway. ATPase which is responsible for recognizing, binding, unfolding and translocation of pupylated proteins into the bacterial 20S proteasome core particle. May be essential for opening the gate of the 20S proteasome via an interaction with its C-terminus, thereby allowing substrate entry and access to the site of proteolysis. Thus, the C-termini of the proteasomal ATPase may function like a 'key in a lock' to induce gate opening and therefore regulate proteolysis. This is Proteasome-associated ATPase from Mycobacterium bovis (strain BCG / Pasteur 1173P2).